The sequence spans 351 residues: Uroporphyrinogen decarboxylase (351 aa).

Substrate-binding positions include 26 to 30, aspartate 75, tyrosine 151, serine 206, and histidine 321; that span reads RQAGR.

Belongs to the uroporphyrinogen decarboxylase family. Homodimer.

The protein resides in the cytoplasm. The enzyme catalyses uroporphyrinogen III + 4 H(+) = coproporphyrinogen III + 4 CO2. Its pathway is porphyrin-containing compound metabolism; protoporphyrin-IX biosynthesis; coproporphyrinogen-III from 5-aminolevulinate: step 4/4. In terms of biological role, catalyzes the decarboxylation of four acetate groups of uroporphyrinogen-III to yield coproporphyrinogen-III. The chain is Uroporphyrinogen decarboxylase from Koribacter versatilis (strain Ellin345).